Reading from the N-terminus, the 139-residue chain is D-ribose pyranase (139 aa).

Catalysis depends on H20, which acts as the Proton donor. Residues D28, H106, and 128–130 contribute to the substrate site; that span reads YAN.

The protein belongs to the RbsD / FucU family. RbsD subfamily. As to quaternary structure, homodecamer.

It localises to the cytoplasm. The enzyme catalyses beta-D-ribopyranose = beta-D-ribofuranose. Its pathway is carbohydrate metabolism; D-ribose degradation; D-ribose 5-phosphate from beta-D-ribopyranose: step 1/2. In terms of biological role, catalyzes the interconversion of beta-pyran and beta-furan forms of D-ribose. The polypeptide is D-ribose pyranase (Actinobacillus pleuropneumoniae serotype 7 (strain AP76)).